The following is a 1141-amino-acid chain: Envelopment polyprotein (1141 aa).

Positions 1–19 (MFCLCLSLLGLLLCWPAAT) are cleaved as a signal peptide. Residues 20–489 (RNLLELKVEC…CVPGLHGWAT (470 aa)) are Lumenal-facing. Intrachain disulfides connect C29–C154, C63–C160, C112–C131, C136–C141, C178–C188, and C213–C252. N137 carries an N-linked (GlcNAc...) asparagine; by host glycan. The N-linked (GlcNAc...) asparagine; by host glycan is linked to N352. Intrachain disulfides connect C381-C440, C385-C394, C410-C429, and C457-C480. Residue N404 is glycosylated (N-linked (GlcNAc...) asparagine; by host). The helical transmembrane segment at 490–510 (ISLLITFCFGWLAIPLLSMII) threads the bilayer. Residues 511–632 (IRFLLIFTYL…LSMFRYKSKC (122 aa)) lie on the Cytoplasmic side of the membrane. The binding to the ribonucleoprotein stretch occupies residues 521–538 (CSKYSTDSKFKLIIEKVK). CCHC-type zinc fingers lie at residues 550-570 (CEVCQQGCETAKELESHKKSC) and 575-596 (CPYCLNPTEATESALQAHFKVC). Binding to the ribonucleoprotein regions lie at residues 593–610 (FKVCKLTTRFQENLKKSL), 597–608 (KLTTRFQENLKK), and 616–630 (KRGLYRTLSMFRYKS). The segment at 612–653 (TYEPKRGLYRTLSMFRYKSKCYVGLVWCILLTMELIVWAASA) is inhibition of interferon induction. An ITAM domain is found at 616–639 (KRGLYRTLSMFRYKSKCYVGLVWC). A phosphotyrosine mark is found at Y620 and Y633. Positions 620 to 623 (YRTL) match the YxxL motif. A helical transmembrane segment spans residues 633–653 (YVGLVWCILLTMELIVWAASA). The Lumenal segment spans residues 654–1109 (ETINLEPGWT…EWLLGILSGN (456 aa)). 8 cysteine pairs are disulfide-bonded: C740-C775, C744-C782, C756-C889, C770-C900, C785-C908, C811-C820, C828-C837, and C868-C872. The fusion loop stretch occupies residues 762 to 782 (FEFETGWGCNPPDCPGVGTGC). N-linked (GlcNAc...) asparagine; by host glycosylation is present at N932. Intrachain disulfides connect C974-C1004, C997-C1049, C1014-C1019, C1050-C1055, and C1089-C1093. Residues 1110 to 1130 (WMVVAVLIALFIFSLLLFSLC) form a helical membrane-spanning segment. The segment at 1126-1141 (LFSLCCPRRQNYKKNK) is binding to the ribonucleoprotein. Topologically, residues 1131–1141 (CPRRQNYKKNK) are cytoplasmic.

This sequence belongs to the hantavirus envelope glycoprotein family. As to quaternary structure, homodimer. Homotetramer; forms heterotetrameric Gn-Gc spikes in the pre-fusion conformation. Interacts (via C-terminus) with the nucleoprotein. Interacts with host TUFM; this interaction contributes to the virus-induced degradation of mitochondria by autophagy, which leads to degradation of host MAVS and inhibition of type I interferon (IFN) responses. Interacts with host MAP1LC3B; this interaction contributes to the virus-induced degradation of mitochondria by autophagy, which leads to degradation of host MAVS and inhibition of type I interferon (IFN) responses. In terms of assembly, homodimer. Homotetramer; forms heterotetrameric Gn-Gc spikes in the pre-fusion conformation. Homotrimer; forms homotrimer in the post-fusion conformation at acidic pH. Interacts (via C-terminus) with the nucleoprotein. In terms of processing, envelope polyprotein precursor is quickly cleaved in vivo just after synthesis, presumably by host signal peptidase.

It is found in the virion membrane. The protein localises to the host cell surface. Its subcellular location is the host Golgi apparatus membrane. The protein resides in the host endoplasmic reticulum membrane. It localises to the host mitochondrion. Its function is as follows. Forms homotetramers with glycoprotein C at the surface of the virion. Attaches the virion to host cell receptors including integrin alpha5/ITGB1. This attachment induces virion internalization predominantly through clathrin-dependent endocytosis. Mediates the assembly and budding of infectious virus particles through its interaction with the nucleocapsid protein and the viral genome. May dysregulate normal immune and endothelial cell responses through an ITAM motif. Translocates to mitochondria, binds to host TUFM and recruits MAP1LC3B. These interactions induce mitochondrial autophagy and therefore destruction of host MAVS leading to inhibition of type I interferon (IFN) responses. Concomitant breakdown of glycoprotein N is apparently prevented by the nucleoprotein that may inhibit Gn-stimulated autophagosome-lysosome fusion. Interacts with the viral genomic RNA. Inhibits the host RIG-I/TBK1 pathway by disrupting the formation of TBK1-TRAF3 complexes and downstream signaling responses required for IFN-beta transcription. Functionally, forms homotetramers with glycoprotein N at the surface of the virion. Attaches the virion to host cell receptors including integrin ITGAV/ITGB3. This attachment induces virion internalization predominantly through clathrin-dependent endocytosis. Class II fusion protein that promotes fusion of viral membrane with host endosomal membrane after endocytosis of the virion. This is Envelopment polyprotein (GP) from Tula orthohantavirus (TULV).